The chain runs to 873 residues: MYQTTAALRSAFLEYFRQQGHQVVDSSSLVPGNDPTLLFTNAGMNQFKDCFLGMEKRSYVRAATAQRCVRAGGKHNDLDNVGYTARHHTFFEMLGNFSFGDYFKEDAIRFAWEFLTGTLKLPKEKLCVTVYHTDDEAFDIWNKQIGVPAENIIRIGDNKGAPFASDNFWQMGDTGPCGPCTEIFYDHGEHIWGGRPGSPEEDGDRFIEIWNIVFMQYNRQSDGTLDPLPKPAVDTGMGIERISAIMQGVHSNYEIDIFQKLIAKAAEIIGVSDLENKSLRVIADHIRSCAFLVADGVMPSNEGRGYVLRRIIRRAVRHGNKLGATDTFFYKLVPTLIEAMGDAAKELKATQTIVEKALKAEEEQFARTLERGLGMLDAALADLKGDTLDGETVFKLYDTYGFPVDLTADVCRERNLKVDEEGFNAAMAEQRSRAQAAGQFSADYNAALKIDTATDFCGYTELAAESKVVALYRDGESVDAAEAGAVLVVVLDNTPFYAESGGQVGDKGQLLAEGVEFNVADTQKFGQGIGHKGQLALGSIKVGDSLKAMVDKKLRHRTELNHSVTHLLHAALRQVLGTHVTQKGSLVDPERLRFDFSHFEGVKREELKAVEDLVNTQIRRNHELNFAEMDIEEAKAKGAMALFGEKYDSKVRVVTMGDFSIELCGGTHVGRTGDIGLFKITSEGGIAAGIRRIEAVTGAAAMAYVAQQQAELEEAAALLKGDVASVVAKLKAQLDKARQLEKENAQLKDKLAAAASADLAGDAQEINGVKVLVKRLEGVEAGALRGLQDELKQKLKSGVVLLAIGSGDKVNLIAGVTQDLTGKVKAGELVAMVAAQVGGKGGGRPDMAQAGGSEPAKLDGALASVVPWLNERL.

The Zn(2+) site is built by His562, His566, Cys664, and His668.

The protein belongs to the class-II aminoacyl-tRNA synthetase family. The cofactor is Zn(2+).

Its subcellular location is the cytoplasm. It carries out the reaction tRNA(Ala) + L-alanine + ATP = L-alanyl-tRNA(Ala) + AMP + diphosphate. Functionally, catalyzes the attachment of alanine to tRNA(Ala) in a two-step reaction: alanine is first activated by ATP to form Ala-AMP and then transferred to the acceptor end of tRNA(Ala). Also edits incorrectly charged Ser-tRNA(Ala) and Gly-tRNA(Ala) via its editing domain. The sequence is that of Alanine--tRNA ligase from Shewanella amazonensis (strain ATCC BAA-1098 / SB2B).